A 90-amino-acid chain; its full sequence is uncharacterized protein (90 aa).

A helical transmembrane segment spans residues 12–32 (VVGGLSFWSFSAGVIMIVNAF).

It is found in the membrane. This is an uncharacterized protein from Mycoplasma pneumoniae (strain ATCC 29342 / M129 / Subtype 1) (Mycoplasmoides pneumoniae).